Here is a 271-residue protein sequence, read N- to C-terminus: Ribosomal RNA small subunit methyltransferase A (271 aa).

6 residues coordinate S-adenosyl-L-methionine: histidine 14, leucine 16, glycine 41, glutamate 63, aspartate 89, and asparagine 107.

It belongs to the class I-like SAM-binding methyltransferase superfamily. rRNA adenine N(6)-methyltransferase family. RsmA subfamily.

It is found in the cytoplasm. It catalyses the reaction adenosine(1518)/adenosine(1519) in 16S rRNA + 4 S-adenosyl-L-methionine = N(6)-dimethyladenosine(1518)/N(6)-dimethyladenosine(1519) in 16S rRNA + 4 S-adenosyl-L-homocysteine + 4 H(+). Specifically dimethylates two adjacent adenosines (A1518 and A1519) in the loop of a conserved hairpin near the 3'-end of 16S rRNA in the 30S particle. May play a critical role in biogenesis of 30S subunits. This Lawsonia intracellularis (strain PHE/MN1-00) protein is Ribosomal RNA small subunit methyltransferase A.